An 841-amino-acid polypeptide reads, in one-letter code: Protein translocase subunit SecA (841 aa).

ATP contacts are provided by residues 79–80, Gln-85, 103–107, and Asp-492; these read MF and GEGKT. Positions 786–813 are disordered; it reads REEVVQGQTTAHQPQEGDDNKKAKKAPV. Residues Cys-825, Cys-827, Cys-836, and Cys-837 each coordinate Zn(2+).

This sequence belongs to the SecA family. As to quaternary structure, part of the essential Sec protein translocation apparatus which comprises SecA, SecYEG and auxiliary proteins SecDF. Other proteins may be involved. Monomer and many different homodimers can be isolated, some of which are not formed in the presence of a synthetic signal peptide. A single SecA monomer interacts with SecY in the channel. Only shows some colocalization with FloA or FloT membrane assemblies. Requires Zn(2+) as cofactor.

The protein resides in the cell membrane. It localises to the cytoplasm. Its subcellular location is the membrane raft. The catalysed reaction is ATP + H2O + cellular proteinSide 1 = ADP + phosphate + cellular proteinSide 2.. Functionally, part of the Sec protein translocase complex. Interacts with the SecYEG preprotein conducting channel. Has a central role in coupling the hydrolysis of ATP to the transfer of proteins into and across the cell membrane, serving as an ATP-driven molecular motor driving the stepwise translocation of polypeptide chains across the membrane. The polypeptide is Protein translocase subunit SecA (Bacillus subtilis (strain 168)).